Reading from the N-terminus, the 507-residue chain is Alkyl hydroperoxide reductase subunit F (507 aa).

207–222 contacts FAD; the sequence is DVLIVGGGPASGSAAI. Cys-335 and Cys-338 are oxidised to a cystine. Position 347–361 (347–361) interacts with NAD(+); sequence DVAVIGGGNSGVEAA. 467–477 is an FAD binding site; it reads TNVPGIFAAGD.

The protein belongs to the class-II pyridine nucleotide-disulfide oxidoreductase family. In terms of assembly, homodimer. It depends on FAD as a cofactor.

Its function is as follows. Serves to protect the cell against DNA damage by alkyl hydroperoxides. It can use either NADH or NADPH as electron donor for direct reduction of redox dyes or of alkyl hydroperoxides when combined with the AhpC protein. The chain is Alkyl hydroperoxide reductase subunit F (ahpF) from Staphylococcus aureus (strain Mu50 / ATCC 700699).